The sequence spans 144 residues: MEVFTKLKEGALLPEYKTSGSAGADLRALIEEPIILKPMQRCLIPTGLSVELPKGIELQVRPRSGLALKHGITVLNTPGTVDSDYRGELAVLLINLGNEDFKIENGDRIAQAVIAQAIQADFLQKDELSNTERGAGGYGSTGIA.

Substrate contacts are provided by residues 63 to 65 (RSG), Asn76, and 80 to 82 (TVD).

This sequence belongs to the dUTPase family. Mg(2+) is required as a cofactor.

It carries out the reaction dUTP + H2O = dUMP + diphosphate + H(+). It participates in pyrimidine metabolism; dUMP biosynthesis; dUMP from dCTP (dUTP route): step 2/2. In terms of biological role, this enzyme is involved in nucleotide metabolism: it produces dUMP, the immediate precursor of thymidine nucleotides and it decreases the intracellular concentration of dUTP so that uracil cannot be incorporated into DNA. This Treponema denticola (strain ATCC 35405 / DSM 14222 / CIP 103919 / JCM 8153 / KCTC 15104) protein is Deoxyuridine 5'-triphosphate nucleotidohydrolase.